Consider the following 443-residue polypeptide: Serine/threonine-protein phosphatase 2A 55 kDa regulatory subunit B beta isoform (443 aa).

WD repeat units follow at residues 22–61 (TEAD…KSQP), 87–128 (EIEE…KRPE), 171–209 (AHTY…RSFN), 220–260 (ELTE…LCDN), 279–317 (EIIS…KPLE), 334–375 (ENDC…DVTL), and 410–443 (DFSK…DKVN).

Belongs to the phosphatase 2A regulatory subunit B family. As to quaternary structure, PP2A consists of a common heterodimeric core enzyme, composed of a 36 kDa catalytic subunit (subunit C) and a 65 kDa constant regulatory subunit (PR65 or subunit A), that associates with a variety of regulatory subunits.

Its subcellular location is the cytoplasm. The protein localises to the cytoskeleton. The protein resides in the membrane. Functionally, the B regulatory subunit might modulate substrate selectivity and catalytic activity, and might also direct the localization of the catalytic enzyme to a particular subcellular compartment. The protein is Serine/threonine-protein phosphatase 2A 55 kDa regulatory subunit B beta isoform (ppp2r2b) of Carassius auratus (Goldfish).